The primary structure comprises 85 residues: Conotoxin Cap15a (85 aa).

The first 23 residues, methionine 1 to serine 23, serve as a signal peptide directing secretion. Residues valine 24 to arginine 49 constitute a propeptide that is removed on maturation. Glutamine 50 bears the Pyrrolidone carboxylic acid mark.

It belongs to the conotoxin O2 superfamily. In terms of processing, contains 4 disulfide bonds. In terms of tissue distribution, expressed by the venom duct.

It localises to the secreted. This is Conotoxin Cap15a from Conus capitaneus (Captain cone).